Here is a 174-residue protein sequence, read N- to C-terminus: MANRNDSRRDSRKDRKKDDIEDQLVAINRITKVVKGGRRMRFAAVVIVGDRKGHVGFGTGKAQEVPEAIRKAVEAGKKRMIKVPTVGTTIPHEVMGHYGSGNIMLKPAEAGSGVAAGGAVRIIMDLAGISDVTSKSLGSNTPINVIRATMDGLSKLKTREDVLKLRESAKSLED.

The S5 DRBM domain maps to 20–83 (IEDQLVAINR…EAGKKRMIKV (64 aa)).

The protein belongs to the universal ribosomal protein uS5 family. Part of the 30S ribosomal subunit. Contacts proteins S4 and S8.

Its function is as follows. With S4 and S12 plays an important role in translational accuracy. Located at the back of the 30S subunit body where it stabilizes the conformation of the head with respect to the body. This is Small ribosomal subunit protein uS5 from Lactobacillus gasseri (strain ATCC 33323 / DSM 20243 / BCRC 14619 / CIP 102991 / JCM 1131 / KCTC 3163 / NCIMB 11718 / NCTC 13722 / AM63).